The following is a 187-amino-acid chain: Hypoxanthine/guanine phosphoribosyltransferase (187 aa).

It belongs to the purine/pyrimidine phosphoribosyltransferase family. Archaeal HPRT subfamily. Homodimer.

It localises to the cytoplasm. It catalyses the reaction IMP + diphosphate = hypoxanthine + 5-phospho-alpha-D-ribose 1-diphosphate. The enzyme catalyses GMP + diphosphate = guanine + 5-phospho-alpha-D-ribose 1-diphosphate. The protein operates within purine metabolism; IMP biosynthesis via salvage pathway; IMP from hypoxanthine: step 1/1. In terms of biological role, catalyzes a salvage reaction resulting in the formation of IMP that is energically less costly than de novo synthesis. The protein is Hypoxanthine/guanine phosphoribosyltransferase of Methanocorpusculum labreanum (strain ATCC 43576 / DSM 4855 / Z).